Reading from the N-terminus, the 137-residue chain is Ribosome-binding factor A (137 aa).

Residues 112-137 (KKDEVKEDESHEDESTDHTEETNEEP) are disordered. Positions 127 to 137 (TDHTEETNEEP) are enriched in basic and acidic residues.

It belongs to the RbfA family. In terms of assembly, monomer. Binds 30S ribosomal subunits, but not 50S ribosomal subunits or 70S ribosomes.

Its subcellular location is the cytoplasm. Its function is as follows. One of several proteins that assist in the late maturation steps of the functional core of the 30S ribosomal subunit. Associates with free 30S ribosomal subunits (but not with 30S subunits that are part of 70S ribosomes or polysomes). Required for efficient processing of 16S rRNA. May interact with the 5'-terminal helix region of 16S rRNA. This is Ribosome-binding factor A from Coprothermobacter proteolyticus (strain ATCC 35245 / DSM 5265 / OCM 4 / BT).